We begin with the raw amino-acid sequence, 831 residues long: Prickle-like protein 1 (831 aa).

One can recognise a PET domain in the interval 14–122 (FGCQRSSTSD…TIKLLSRAVM (109 aa)). LIM zinc-binding domains are found at residues 124 to 189 (AVCE…LLKP), 189 to 249 (PRCS…LYAE), and 249 to 313 (EYCE…EDVH). The interval 313–342 (HASDSSDSAFQSARSRDSRRSVRMGKSSRS) is disordered. Serine 315, serine 591, and serine 594 each carry phosphoserine. Disordered stretches follow at residues 663–688 (FEER…NALN) and 763–831 (CSSS…CIIS). Over residues 669–680 (RSHHHRRRRSRK) the composition is skewed to basic residues. The residue at position 683 (serine 683) is a Phosphoserine. The segment covering 815 to 831 (TKSKKKKGHKGKNCIIS) has biased composition (basic residues). Cysteine 828 bears the Cysteine methyl ester mark. The S-farnesyl cysteine moiety is linked to residue cysteine 828. Residues 829–831 (IIS) constitute a propeptide, removed in mature form.

Belongs to the prickle / espinas / testin family. As to quaternary structure, interacts with REST. Expressed at highest levels in placenta and at lower levels in lung, liver, kidney and pancreas. Expressed in thalamus, hippocampus, cerebral cortex, and cerebellum (in neurons rather than glia).

It is found in the nucleus membrane. It localises to the cytoplasm. Its subcellular location is the cytosol. Its function is as follows. Involved in the planar cell polarity pathway that controls convergent extension during gastrulation and neural tube closure. Convergent extension is a complex morphogenetic process during which cells elongate, move mediolaterally, and intercalate between neighboring cells, leading to convergence toward the mediolateral axis and extension along the anteroposterior axis. Necessary for nuclear localization of REST. May serve as nuclear receptor. This is Prickle-like protein 1 (PRICKLE1) from Homo sapiens (Human).